A 634-amino-acid polypeptide reads, in one-letter code: Calcium up-regulated protein D (634 aa).

A disordered region spans residues 1–23 (MINIEDISKSSNQSEEKQLKSTS). Ricin B-type lectin domains lie at 27–146 (KPKY…WTTF) and 117–250 (PGNG…WGIN).

This sequence belongs to the cup family.

The protein resides in the cytoplasm. It is found in the membrane. Functionally, may play an important role in stabilizing and/or regulating the cell membrane during Ca(2+) stress or certain stages of development. The protein is Calcium up-regulated protein D (cupD) of Dictyostelium discoideum (Social amoeba).